Reading from the N-terminus, the 387-residue chain is MNRWLLPEDITDVMPAEACKVESLRRAVLDLYQSYGYELVAPPILEFLDSLLTGTGSDLNLQTFKLVDQLSGRTLGLRADMTPQVARIDAHLLNRADVTRLCYAGSVAHARTPVGSSAREELQLGAEIYGCATWEADLEAITLLLKTLSVAGLEKVYLDLSHAGILAGILDGQSLDKETIEALYGLLQSKDRPRLGEWSTCLPENVAKALVALIELNGPCAEVLAKAKKELPKHAAIDKALADLERLVSAAANLSANVELSIDLADLRGYQYHSGVMFAAYVDRLPQPIARGGRYDHVGQAFGRPRPATGFSLDLLTLANLSPLNVRKMAITAPWVEDAELSKAIAALRDKGEVVIQVLAGTTLEAAEYQCDRELVKQGSSWEVKKK.

The protein belongs to the class-II aminoacyl-tRNA synthetase family. HisZ subfamily. Heteromultimer composed of HisG and HisZ subunits.

It is found in the cytoplasm. Its pathway is amino-acid biosynthesis; L-histidine biosynthesis; L-histidine from 5-phospho-alpha-D-ribose 1-diphosphate: step 1/9. Functionally, required for the first step of histidine biosynthesis. May allow the feedback regulation of ATP phosphoribosyltransferase activity by histidine. The polypeptide is ATP phosphoribosyltransferase regulatory subunit (Polynucleobacter necessarius subsp. necessarius (strain STIR1)).